The primary structure comprises 142 residues: Ninjurin-2 (142 aa).

Positions 1-21 are disordered; the sequence is MESARENIDLQPGSSDPRSQP. The Extracellular segment spans residues 1–60; sequence MESARENIDLQPGSSDPRSQPINLNHYATKKSVAESMLDVALFMSNAMRLKAVLEQGPSS. Over residues 12 to 21 the composition is skewed to polar residues; sequence PGSSDPRSQP. A helix alpha1 region spans residues 25–37; the sequence is NHYATKKSVAESM. Residues 38–57 are helix alpha2; that stretch reads LDVALFMSNAMRLKAVLEQG. A helical transmembrane segment spans residues 61 to 92; that stretch reads HYYTTLVTLISLSLLLQVVIGVLLVVIARLNL. Over 93–96 the chain is Cytoplasmic; that stretch reads NEVE. A helical membrane pass occupies residues 97-126; sequence KQWRLNQLNNAATILVFFTVVINVFITAFG. Gln103 is a cholesterol binding site. Topologically, residues 127-142 are extracellular; the sequence is AHKTGFLAARASRNPL.

It belongs to the ninjurin family. Homooligomer; in response to stimuli, homooligomerizes into filaments. In contrast to NINJ1, the filament is curved toward the intracellular space, preventing its circularization on a relatively flat membrane to mediate plasma membrane rupture: curvature is caused by cholesterol-binding at the cytoplasmic leaflet. Widely expressed. In adult, higher expression in the bone marrow and peripheral blood lymphocytes, medium in the lung, lymph node, thyroid, uterus, thymus, spleen, prostate and skeletal muscle, lower in the liver, placenta, brain, heart and kidney. In embryo, higher expression in the thymus, heart and liver, lower in the spleen, lung, brain and kidney.

It is found in the cell membrane. Its role in unclear. In contrast to NINJ1 paralog, does not mediate plasma membrane rupture (cytolysis) downstream of necroptotic and pyroptotic programmed cell death. While it is able to oligomerize and form filaments, filaments are curved toward the intracellular space, preventing circularization to mediate plasma membrane rupture. May act as a homophilic transmembrane adhesion molecule involved in nerve regeneration. Promotes axonal growth. The polypeptide is Ninjurin-2 (Homo sapiens (Human)).